Reading from the N-terminus, the 432-residue chain is Asparagine--tRNA ligase (432 aa).

It belongs to the class-II aminoacyl-tRNA synthetase family. As to quaternary structure, homodimer.

The protein localises to the cytoplasm. It catalyses the reaction tRNA(Asn) + L-asparagine + ATP = L-asparaginyl-tRNA(Asn) + AMP + diphosphate + H(+). The sequence is that of Asparagine--tRNA ligase from Limosilactobacillus reuteri (strain DSM 20016) (Lactobacillus reuteri).